Consider the following 501-residue polypeptide: Cytokinin dehydrogenase 2 (501 aa).

The first 22 residues, 1–22 (MANLRLMITLITVLMITKSSNG), serve as a signal peptide directing secretion. Residues Asn-32 and Asn-51 are each glycosylated (N-linked (GlcNAc...) asparagine). In terms of domain architecture, FAD-binding PCMH-type spans 53-226 (TTVTPGGVIC…TRARIVLDHA (174 aa)). Residues Ala-87, Gly-89, and Gly-91 each contribute to the FAD site. Position 92 is a pros-8alpha-FAD histidine (His-92). FAD is bound by residues Ser-93 and Gln-97. Asn-107 is a glycosylation site (N-linked (GlcNAc...) asparagine). Positions 150, 155, 161, 165, 216, 460, 495, and 498 each coordinate FAD.

Belongs to the oxygen-dependent FAD-linked oxidoreductase family. FAD serves as cofactor. In terms of tissue distribution, expressed in the shoot apex, in stipules, and occasionally in the most apical part of the inflorescence stems. Not detected in roots.

The protein resides in the endoplasmic reticulum. Its subcellular location is the secreted. It localises to the extracellular space. The catalysed reaction is N(6)-dimethylallyladenine + A + H2O = 3-methyl-2-butenal + adenine + AH2. Catalyzes the oxidation of cytokinins, a family of N(6)-substituted adenine derivatives that are plant hormones, where the substituent is an isopentenyl group. Modulates asymmetric cytokinin signaling in emerged lateral roots. Its activity determines cell elongation and number in emerged lateral roots and defines angular growth of lateral roots. This chain is Cytokinin dehydrogenase 2 (CKX2), found in Arabidopsis thaliana (Mouse-ear cress).